A 121-amino-acid polypeptide reads, in one-letter code: Small ribosomal subunit protein uS13 (121 aa).

A disordered region spans residues 92–121; sequence RRGLPVRGQNSKNNARTRKGPKRTVANKKK. Residues 106 to 121 show a composition bias toward basic residues; the sequence is ARTRKGPKRTVANKKK.

Belongs to the universal ribosomal protein uS13 family. In terms of assembly, part of the 30S ribosomal subunit. Forms a loose heterodimer with protein S19. Forms two bridges to the 50S subunit in the 70S ribosome.

Its function is as follows. Located at the top of the head of the 30S subunit, it contacts several helices of the 16S rRNA. In the 70S ribosome it contacts the 23S rRNA (bridge B1a) and protein L5 of the 50S subunit (bridge B1b), connecting the 2 subunits; these bridges are implicated in subunit movement. Contacts the tRNAs in the A and P-sites. This Shouchella clausii (strain KSM-K16) (Alkalihalobacillus clausii) protein is Small ribosomal subunit protein uS13.